A 460-amino-acid polypeptide reads, in one-letter code: Ribosomal protein uS12 methylthiotransferase RimO (460 aa).

An MTTase N-terminal domain is found at 17–128 (PAVAVLHLGC…IVQVIQRAER (112 aa)). Residues cysteine 26, cysteine 62, cysteine 91, cysteine 166, cysteine 170, and cysteine 173 each contribute to the [4Fe-4S] cluster site. In terms of domain architecture, Radical SAM core spans 152–381 (TTHAPVAYLR…MQLQQGIAFR (230 aa)). In terms of domain architecture, TRAM spans 384–450 (REQVGQVVPV…PYDLFGQVVE (67 aa)).

Belongs to the methylthiotransferase family. RimO subfamily. [4Fe-4S] cluster is required as a cofactor.

It is found in the cytoplasm. It catalyses the reaction L-aspartate(89)-[ribosomal protein uS12]-hydrogen + (sulfur carrier)-SH + AH2 + 2 S-adenosyl-L-methionine = 3-methylsulfanyl-L-aspartate(89)-[ribosomal protein uS12]-hydrogen + (sulfur carrier)-H + 5'-deoxyadenosine + L-methionine + A + S-adenosyl-L-homocysteine + 2 H(+). Functionally, catalyzes the methylthiolation of an aspartic acid residue of ribosomal protein uS12. This is Ribosomal protein uS12 methylthiotransferase RimO from Synechococcus sp. (strain JA-3-3Ab) (Cyanobacteria bacterium Yellowstone A-Prime).